Consider the following 955-residue polypeptide: MEASSSGITNGKNKVFHAEGGLDLQSHQLDMQILPDGPKSDVDFSEILNAIQEMAKDVNILFDELEAVNSPCKDDDSLLHPGNLTSTSEDTSRLEAGGETVRERNKSNGLYFRDGKCRIDYILVYRKSNPQTEKREVFERNIRAEGLQMEKESSLINSDIIFVKLHAPWEVLGRYAEQMNVRMPFRRKIYYLPRRYKFMSRIDKQISRFRRWLPKKPMRLDKETLPDLEENDCYTAPFSQQRIHHFIIHNKDTFFNNATRSRIVHHILQRIKYEEGKNKIGLNRLLTNGSYEAAFPLHEGSYRSKNSIKTHGAVNHRHLLYECWASWGVWYKYQPLDLVRRYFGEKIGLYFAWLGWYTGMLFPAAFIGLFVFLYGVTTLDHCQVSKEVCQATDIIMCPVCDKYCPFMRLSDSCVYAKVTHLFDNGATVFFAVFMAVWATVFLEFWKRRRAVIAYDWDLIDWEEEEEEIRPQFEAKYSKKERMNPISGKPEPYQAFTDKCSRLIVSASGIFFMICVVIAAVFGIVIYRVVTVSTFAAFKWALIRNNSQVATTGTAVCINFCIIMLLNVLYEKVALLLTNLEQPRTESEWENSFTLKMFLFQFVNLNSSTFYIAFFLGRFTGHPGAYLRLINRWRLEECHPSGCLIDLCMQMGIIMVLKQTWNNFMELGYPLIQNWWTRRKVRQEHGTERKINFPQWEKDYNLQPMNAYGLFDEYLEMILQFGFTTIFVAAFPLAPLLALLNNIIEIRLDAYKFVTQWRRPLASRAKDIGIWYGILEGIGILSVITNAFVIAITSDFIPRLVYAYKYGPCAGQGEAGQKCMVGYVNASLSVFRISDFENRSEPESDGSEFSGTPLKYCRYRDYRDPPHSLAPYGYTLQFWHVLAARLAFIIVFEHLVFCIKHLISYLIPDLPKDLRDRMRREKYLIQEMMYEAELERLQKERKERKKNGKAHHNEWP.

The Cytoplasmic segment spans residues 1–352 (MEASSSGITN…FGEKIGLYFA (352 aa)). Positions 73–97 (KDDDSLLHPGNLTSTSEDTSRLEAG) are disordered. Residues 353–373 (WLGWYTGMLFPAAFIGLFVFL) form a helical membrane-spanning segment. Residues 374–424 (YGVTTLDHCQVSKEVCQATDIIMCPVCDKYCPFMRLSDSCVYAKVTHLFDN) lie on the Extracellular side of the membrane. Residues 425–445 (GATVFFAVFMAVWATVFLEFW) form a helical membrane-spanning segment. Over 446–505 (KRRRAVIAYDWDLIDWEEEEEEIRPQFEAKYSKKERMNPISGKPEPYQAFTDKCSRLIVS) the chain is Cytoplasmic. The helical transmembrane segment at 506 to 526 (ASGIFFMICVVIAAVFGIVIY) threads the bilayer. The Extracellular segment spans residues 527 to 547 (RVVTVSTFAAFKWALIRNNSQ). An N-linked (GlcNAc...) asparagine glycan is attached at asparagine 544. A helical transmembrane segment spans residues 548-568 (VATTGTAVCINFCIIMLLNVL). Over 569–595 (YEKVALLLTNLEQPRTESEWENSFTLK) the chain is Cytoplasmic. The chain crosses the membrane as a helical span at residues 596–616 (MFLFQFVNLNSSTFYIAFFLG). Residues 617-715 (RFTGHPGAYL…AYGLFDEYLE (99 aa)) lie on the Extracellular side of the membrane. The helical transmembrane segment at 716 to 736 (MILQFGFTTIFVAAFPLAPLL) threads the bilayer. Residues 737–768 (ALLNNIIEIRLDAYKFVTQWRRPLASRAKDIG) are Cytoplasmic-facing. A helical membrane pass occupies residues 769-789 (IWYGILEGIGILSVITNAFVI). Topologically, residues 790 to 885 (AITSDFIPRL…QFWHVLAARL (96 aa)) are extracellular. Asparagine 824 and asparagine 837 each carry an N-linked (GlcNAc...) asparagine glycan. The chain crosses the membrane as a helical span at residues 886-906 (AFIIVFEHLVFCIKHLISYLI). The Cytoplasmic portion of the chain corresponds to 907–955 (PDLPKDLRDRMRREKYLIQEMMYEAELERLQKERKERKKNGKAHHNEWP).

This sequence belongs to the anoctamin family. Predominantly expressed in neuronal tissues. Expressed at low levels in ovary, uterus, heart and brain.

The protein localises to the cell membrane. The catalysed reaction is a 1,2-diacyl-sn-glycero-3-phospho-L-serine(in) = a 1,2-diacyl-sn-glycero-3-phospho-L-serine(out). It catalyses the reaction a beta-D-galactosyl-(1&lt;-&gt;1')-N-acylsphing-4-enine(out) = a beta-D-galactosyl-(1&lt;-&gt;1')-N-acylsphing-4-enine(in). It carries out the reaction a 1,2-diacyl-sn-glycero-3-phosphocholine(in) = a 1,2-diacyl-sn-glycero-3-phosphocholine(out). Its function is as follows. Has calcium-dependent phospholipid scramblase activity; scrambles phosphatidylserine, phosphatidylcholine and galactosylceramide. Does not exhibit calcium-activated chloride channel (CaCC) activity. In Mus musculus (Mouse), this protein is Anoctamin-4.